The following is a 355-amino-acid chain: Uroporphyrinogen decarboxylase (355 aa).

Substrate-binding positions include 27-31 (RQAGR), phenylalanine 46, aspartate 78, tyrosine 155, serine 210, and histidine 328.

This sequence belongs to the uroporphyrinogen decarboxylase family. As to quaternary structure, homodimer.

Its subcellular location is the cytoplasm. The enzyme catalyses uroporphyrinogen III + 4 H(+) = coproporphyrinogen III + 4 CO2. The protein operates within porphyrin-containing compound metabolism; protoporphyrin-IX biosynthesis; coproporphyrinogen-III from 5-aminolevulinate: step 4/4. Functionally, catalyzes the decarboxylation of four acetate groups of uroporphyrinogen-III to yield coproporphyrinogen-III. This chain is Uroporphyrinogen decarboxylase, found in Pseudomonas aeruginosa (strain ATCC 15692 / DSM 22644 / CIP 104116 / JCM 14847 / LMG 12228 / 1C / PRS 101 / PAO1).